Here is a 502-residue protein sequence, read N- to C-terminus: Calnexin homolog (502 aa).

The first 19 residues, 1–19 (MKFSAYLWWLFLNLALVKG), serve as a signal peptide directing secretion. Topologically, residues 20-481 (TSLLSNVTLA…IDRILEQPLK (462 aa)) are lumenal. Residues N25 and N104 are each glycosylated (N-linked (GlcNAc...) asparagine). The cysteines at positions 125 and 161 are disulfide-linked. K131 and D159 together coordinate an alpha-D-glucoside. Residues 248 to 381 (IPDVSVAKPH…PEIENPLYYE (134 aa)) form a p domain (Extended arm) region. 5 consecutive repeat copies span residues 250–261 (DVSVAKPHDWDD), 267–278 (DPEAVKLSDRDE), 286–297 (HPDGTEPPEWNS), 305–316 (DPNAQKPSWWKE), and 320–330 (GEWIPPMIKNP). 2 4 X approximate repeats regions span residues 250–316 (DVSV…WWKE) and 320–377 (GEWI…IENP). N296 carries an N-linked (GlcNAc...) asparagine glycan. C332 and C338 are joined by a disulfide. 3 tandem repeats follow at residues 339 to 349 (GQQIPGLINNA), 353 to 363 (GPGELNEIINP), and 367 to 377 (GEWHPPEIENP). An an alpha-D-glucoside-binding site is contributed by E398. Residues N416 and N425 are each glycosylated (N-linked (GlcNAc...) asparagine). The chain crosses the membrane as a helical span at residues 482-502 (FVLTAAVVLLTTSVLCCVVFT).

It belongs to the calreticulin family. As to quaternary structure, interacts with MPD1.

The protein resides in the endoplasmic reticulum membrane. Functionally, interacts with newly synthesized monoglucosylated glycoproteins in the endoplasmic reticulum. It may act in assisting protein assembly and/or in the retention within the ER of unassembled protein subunits. It seems to play a major role in the quality control apparatus of the ER by the retention of incorrectly folded proteins. The chain is Calnexin homolog (CNE1) from Saccharomyces cerevisiae (strain ATCC 204508 / S288c) (Baker's yeast).